A 285-amino-acid polypeptide reads, in one-letter code: uncharacterized protein (285 aa).

Residues 197–217 traverse the membrane as a helical segment; that stretch reads PTIGALLSLVSAFFSFIPFLM.

It localises to the membrane. This is an uncharacterized protein from Saccharomyces cerevisiae (strain ATCC 204508 / S288c) (Baker's yeast).